The primary structure comprises 621 residues: Chaperone protein HtpG (621 aa).

The tract at residues 1 to 328 (MTQEKKKFDA…SEDLPLNISR (328 aa)) is a; substrate-binding. Residues 329–544 (ESLQHNNVLE…DTAMDIRMER (216 aa)) form a b region. Positions 545–621 (FLIEQKQIAS…LNDILQKAIL (77 aa)) are c.

It belongs to the heat shock protein 90 family. As to quaternary structure, homodimer.

Its subcellular location is the cytoplasm. In terms of biological role, molecular chaperone. Has ATPase activity. This is Chaperone protein HtpG from Rickettsia typhi (strain ATCC VR-144 / Wilmington).